The following is a 352-amino-acid chain: tRNA (guanine-N(1)-)-methyltransferase (352 aa).

Residues Gly109 and 129-134 each bind S-adenosyl-L-methionine; that span reads IGDYVL.

The protein belongs to the RNA methyltransferase TrmD family. As to quaternary structure, homodimer.

The protein resides in the cytoplasm. It catalyses the reaction guanosine(37) in tRNA + S-adenosyl-L-methionine = N(1)-methylguanosine(37) in tRNA + S-adenosyl-L-homocysteine + H(+). Functionally, specifically methylates guanosine-37 in various tRNAs. In Chlamydia trachomatis serovar A (strain ATCC VR-571B / DSM 19440 / HAR-13), this protein is tRNA (guanine-N(1)-)-methyltransferase.